Reading from the N-terminus, the 297-residue chain is Protoheme IX farnesyltransferase (297 aa).

Helical transmembrane passes span 12–32 (PGII…AAKG), 36–56 (YALF…GCVF), 85–105 (VSLV…YLAA), 108–128 (LAMW…SLYM), 133–153 (VYGT…GYCA), 163–183 (LILL…IAIF), 209–229 (ITLY…SGYA), 230–250 (GYKY…MALQ), and 266–286 (FIFS…DFMV).

This sequence belongs to the UbiA prenyltransferase family. Protoheme IX farnesyltransferase subfamily.

It localises to the cell inner membrane. It catalyses the reaction heme b + (2E,6E)-farnesyl diphosphate + H2O = Fe(II)-heme o + diphosphate. It functions in the pathway porphyrin-containing compound metabolism; heme O biosynthesis; heme O from protoheme: step 1/1. Converts heme B (protoheme IX) to heme O by substitution of the vinyl group on carbon 2 of heme B porphyrin ring with a hydroxyethyl farnesyl side group. The sequence is that of Protoheme IX farnesyltransferase from Sodalis glossinidius (strain morsitans).